Consider the following 436-residue polypeptide: 3-ketoacyl-CoA thiolase (436 aa).

Residue C99 is the Acyl-thioester intermediate of the active site. Active-site proton acceptor residues include H392 and C422.

This sequence belongs to the thiolase-like superfamily. Thiolase family. Heterotetramer of two alpha chains (FadJ) and two beta chains (FadI).

The protein resides in the cytoplasm. It carries out the reaction an acyl-CoA + acetyl-CoA = a 3-oxoacyl-CoA + CoA. Its pathway is lipid metabolism; fatty acid beta-oxidation. Its function is as follows. Catalyzes the final step of fatty acid oxidation in which acetyl-CoA is released and the CoA ester of a fatty acid two carbons shorter is formed. The polypeptide is 3-ketoacyl-CoA thiolase (Shigella flexneri).